The following is a 551-amino-acid chain: MSGTKYIFVTGGVVSSIGKGTSAAALGMLLKSRGYRVVLQKFDPYINVDPGTMNPYQHGEVFVTEDGAETDLDLGHYERFLDENLGRLSNVTTGSVYWEVISRERRGDYLGATVQVIPHITNEIKARIGRLGREKDVVITEIGGTVGDIESQPFLEAIRQFRNDVGRKNVLYVHVSYVPYIEAAGELKTKPTQHSTQRLREMGISPDILICRADRPIGEEIRRKIALFGDVEVDSVIPAQDAPTLYDIPLSLHGSGLDALVLEKLGLPAPPARLEEWRGLVRRLHGAEREVRVAVIGKYIRLQDAYLSVVEALRHAGGAHEVRVELDWVDSEQISDPEAARERLRGADGVLVLHGFGQRGIEGKIEAARYARESGTPYLGLCLGMQIAVIEFARNVAGLEMANSTEFDEETPHPVIDIMPDQVGVEMGGTMRLGSYPCRLRPGTLAARVYGAEVVHERHRHRYEVNNAYREVLEEAGMVFSGTSPDGRLVEIAELAGHPFFIGSQFHPEFKSRPLRPHPLFRGFVGACLGAAEEAGRVTAPAAGRKDGASG.

An amidoligase domain region spans residues 1 to 267 (MSGTKYIFVT…DALVLEKLGL (267 aa)). CTP is bound at residue Ser-15. A UTP-binding site is contributed by Ser-15. Residue 16–21 (SIGKGT) participates in ATP binding. Tyr-56 is an L-glutamine binding site. Asp-73 is a binding site for ATP. Mg(2+) is bound by residues Asp-73 and Glu-141. Residues 148–150 (DIE), 188–193 (KTKPTQ), and Lys-224 each bind CTP. UTP-binding positions include 188–193 (KTKPTQ) and Lys-224. Residues 292–534 (RVAVIGKYIR…VGACLGAAEE (243 aa)) enclose the Glutamine amidotransferase type-1 domain. Gly-355 serves as a coordination point for L-glutamine. Catalysis depends on Cys-382, which acts as the Nucleophile; for glutamine hydrolysis. Residues 383–386 (LGMQ), Glu-406, and Arg-462 contribute to the L-glutamine site. Active-site residues include His-507 and Glu-509.

This sequence belongs to the CTP synthase family. As to quaternary structure, homotetramer.

It carries out the reaction UTP + L-glutamine + ATP + H2O = CTP + L-glutamate + ADP + phosphate + 2 H(+). The catalysed reaction is L-glutamine + H2O = L-glutamate + NH4(+). It catalyses the reaction UTP + NH4(+) + ATP = CTP + ADP + phosphate + 2 H(+). The protein operates within pyrimidine metabolism; CTP biosynthesis via de novo pathway; CTP from UDP: step 2/2. Its activity is regulated as follows. Allosterically activated by GTP, when glutamine is the substrate; GTP has no effect on the reaction when ammonia is the substrate. The allosteric effector GTP functions by stabilizing the protein conformation that binds the tetrahedral intermediate(s) formed during glutamine hydrolysis. Inhibited by the product CTP, via allosteric rather than competitive inhibition. Catalyzes the ATP-dependent amination of UTP to CTP with either L-glutamine or ammonia as the source of nitrogen. Regulates intracellular CTP levels through interactions with the four ribonucleotide triphosphates. This Rubrobacter xylanophilus (strain DSM 9941 / JCM 11954 / NBRC 16129 / PRD-1) protein is CTP synthase.